The sequence spans 371 residues: Queuine tRNA-ribosyltransferase (371 aa).

The Proton acceptor role is filled by D92. Residues 92–96, D147, Q190, and G217 each bind substrate; that span reads DSGGF. Positions 248–254 are RNA binding; it reads GVGKPID. D267 acts as the Nucleophile in catalysis. The tract at residues 272–276 is RNA binding; important for wobble base 34 recognition; sequence TRSGR.

This sequence belongs to the queuine tRNA-ribosyltransferase family. In terms of assembly, homodimer. Within each dimer, one monomer is responsible for RNA recognition and catalysis, while the other monomer binds to the replacement base PreQ1.

The catalysed reaction is 7-aminomethyl-7-carbaguanine + guanosine(34) in tRNA = 7-aminomethyl-7-carbaguanosine(34) in tRNA + guanine. The protein operates within tRNA modification; tRNA-queuosine biosynthesis. In terms of biological role, catalyzes the base-exchange of a guanine (G) residue with the queuine precursor 7-aminomethyl-7-deazaguanine (PreQ1) at position 34 (anticodon wobble position) in tRNAs with GU(N) anticodons (tRNA-Asp, -Asn, -His and -Tyr). Catalysis occurs through a double-displacement mechanism. The nucleophile active site attacks the C1' of nucleotide 34 to detach the guanine base from the RNA, forming a covalent enzyme-RNA intermediate. The proton acceptor active site deprotonates the incoming PreQ1, allowing a nucleophilic attack on the C1' of the ribose to form the product. After dissociation, two additional enzymatic reactions on the tRNA convert PreQ1 to queuine (Q), resulting in the hypermodified nucleoside queuosine (7-(((4,5-cis-dihydroxy-2-cyclopenten-1-yl)amino)methyl)-7-deazaguanosine). This Caulobacter vibrioides (strain ATCC 19089 / CIP 103742 / CB 15) (Caulobacter crescentus) protein is Queuine tRNA-ribosyltransferase.